Reading from the N-terminus, the 606-residue chain is Granule-bound starch synthase 1, chloroplastic/amyloplastic (606 aa).

Residues 1-76 constitute a chloroplast transit peptide; sequence MSALTTSQLA…GSRRFPSVVV (76 aa). The interval 29–67 is disordered; the sequence is RHGFQGLKPRSPAGGDASSLSVTTSARATPKQQRSVQRG. The segment covering 46–66 has biased composition (polar residues); that stretch reads SSLSVTTSARATPKQQRSVQR. Lys97 is an ADP-alpha-D-glucose binding site.

The protein belongs to the glycosyltransferase 1 family. Bacterial/plant glycogen synthase subfamily.

It is found in the plastid. Its subcellular location is the chloroplast. The protein localises to the amyloplast. It carries out the reaction an NDP-alpha-D-glucose + [(1-&gt;4)-alpha-D-glucosyl](n) = [(1-&gt;4)-alpha-D-glucosyl](n+1) + a ribonucleoside 5'-diphosphate + H(+). The protein operates within glycan biosynthesis; starch biosynthesis. Its function is as follows. Required for the synthesis of amylose in endosperm. This Oryza sativa (Rice) protein is Granule-bound starch synthase 1, chloroplastic/amyloplastic (WAXY).